Reading from the N-terminus, the 87-residue chain is Cobalt transport protein CbiN (87 aa).

2 helical membrane passes run 4–24 (LLLL…EWAG) and 58–78 (MLFS…LGYY).

This sequence belongs to the CbiN family. In terms of assembly, forms an energy-coupling factor (ECF) transporter complex composed of an ATP-binding protein (A component, CbiO), a transmembrane protein (T component, CbiQ) and 2 possible substrate-capture proteins (S components, CbiM and CbiN) of unknown stoichimetry.

It is found in the cell membrane. It functions in the pathway cofactor biosynthesis; adenosylcobalamin biosynthesis. Part of the energy-coupling factor (ECF) transporter complex CbiMNOQ involved in cobalt import. This is Cobalt transport protein CbiN from Archaeoglobus fulgidus (strain ATCC 49558 / DSM 4304 / JCM 9628 / NBRC 100126 / VC-16).